A 168-amino-acid polypeptide reads, in one-letter code: MVEDILAPGLRVVFCGINPGLSSAGTGFPFAHPANRFWKVIYQAGFTDRQLKPQEAQHLLDYRCGVTKLVDRPTVQANEVSKQELHAGGRKLIEKIEDYQPQALAILGKQAYEQGFSQRGAQWGKQTLTIGSTQIWVLPNPSGLSRVSLEKLVEAYRELDQALVVRGL.

The protein belongs to the uracil-DNA glycosylase (UDG) superfamily. TDG/mug family. In terms of assembly, binds DNA as a monomer.

It localises to the cytoplasm. The enzyme catalyses Specifically hydrolyzes mismatched double-stranded DNA and polynucleotides, releasing free uracil.. Functionally, excises ethenocytosine and uracil, which can arise by alkylation or deamination of cytosine, respectively, from the corresponding mispairs with guanine in ds-DNA. It is capable of hydrolyzing the carbon-nitrogen bond between the sugar-phosphate backbone of the DNA and the mispaired base. The complementary strand guanine functions in substrate recognition. Required for DNA damage lesion repair in stationary-phase cells. This is G/U mismatch-specific DNA glycosylase from Escherichia coli (strain SMS-3-5 / SECEC).